A 138-amino-acid polypeptide reads, in one-letter code: Large ribosomal subunit protein uL16 (138 aa).

Residues 1–16 are compositionally biased toward basic residues; sequence MLIPKRVKYRRQHRPT. Residues 1 to 23 are disordered; the sequence is MLIPKRVKYRRQHRPTRSGVSKG.

Belongs to the universal ribosomal protein uL16 family. Part of the 50S ribosomal subunit.

Functionally, binds 23S rRNA and is also seen to make contacts with the A and possibly P site tRNAs. This Corynebacterium aurimucosum (strain ATCC 700975 / DSM 44827 / CIP 107346 / CN-1) (Corynebacterium nigricans) protein is Large ribosomal subunit protein uL16.